The following is a 388-amino-acid chain: Chorismate synthase (388 aa).

Positions 39 and 45 each coordinate NADP(+). A disordered region spans residues 95–118 (EKNEKSRRVSRPRPGHADLVGGMK). FMN contacts are provided by residues 130–132 (RSS), 251–252 (NA), glycine 296, 311–315 (KPIPT), and arginine 337.

The protein belongs to the chorismate synthase family. Homotetramer. FMNH2 is required as a cofactor.

It carries out the reaction 5-O-(1-carboxyvinyl)-3-phosphoshikimate = chorismate + phosphate. Its pathway is metabolic intermediate biosynthesis; chorismate biosynthesis; chorismate from D-erythrose 4-phosphate and phosphoenolpyruvate: step 7/7. Functionally, catalyzes the anti-1,4-elimination of the C-3 phosphate and the C-6 proR hydrogen from 5-enolpyruvylshikimate-3-phosphate (EPSP) to yield chorismate, which is the branch point compound that serves as the starting substrate for the three terminal pathways of aromatic amino acid biosynthesis. This reaction introduces a second double bond into the aromatic ring system. The chain is Chorismate synthase from Listeria monocytogenes serotype 4b (strain F2365).